The sequence spans 277 residues: Ubiquinone biosynthesis protein COQ4, mitochondrial (277 aa).

Residues 1–14 (MLTKRALRTTDPYR) constitute a mitochondrion transit peptide. Zn(2+) is bound by residues histidine 157, aspartate 158, histidine 161, and glutamate 173.

The protein belongs to the COQ4 family. Component of a multi-subunit COQ enzyme complex, composed of at least COQ3, COQ4, COQ5, COQ6, COQ7 and COQ9. Zn(2+) is required as a cofactor.

It localises to the mitochondrion inner membrane. The catalysed reaction is a 4-hydroxy-3-methoxy-5-(all-trans-polyprenyl)benzoate + H(+) = a 2-methoxy-6-(all-trans-polyprenyl)phenol + CO2. The protein operates within cofactor biosynthesis; ubiquinone biosynthesis. Functionally, lyase that catalyzes the C1-decarboxylation of 4-hydroxy-3-methoxy-5-(all-trans-polyprenyl)benzoic acid into 2-methoxy-6-(all-trans-polyprenyl)phenol during ubiquinone biosynthesis. In Ajellomyces capsulatus (strain G186AR / H82 / ATCC MYA-2454 / RMSCC 2432) (Darling's disease fungus), this protein is Ubiquinone biosynthesis protein COQ4, mitochondrial.